A 434-amino-acid polypeptide reads, in one-letter code: Gamma-glutamyl phosphate reductase (434 aa).

This sequence belongs to the gamma-glutamyl phosphate reductase family.

The protein resides in the cytoplasm. It catalyses the reaction L-glutamate 5-semialdehyde + phosphate + NADP(+) = L-glutamyl 5-phosphate + NADPH + H(+). The protein operates within amino-acid biosynthesis; L-proline biosynthesis; L-glutamate 5-semialdehyde from L-glutamate: step 2/2. In terms of biological role, catalyzes the NADPH-dependent reduction of L-glutamate 5-phosphate into L-glutamate 5-semialdehyde and phosphate. The product spontaneously undergoes cyclization to form 1-pyrroline-5-carboxylate. This chain is Gamma-glutamyl phosphate reductase, found in Rhodopirellula baltica (strain DSM 10527 / NCIMB 13988 / SH1).